The chain runs to 77 residues: uncharacterized protein (77 aa).

Residues 1–15 (MNRTSESVEPQQNEK) are compositionally biased toward polar residues. Disordered regions lie at residues 1 to 20 (MNRT…AVHW) and 31 to 52 (TYSN…QRTF). The segment covering 33–44 (SNEDDEDNEEGD) has biased composition (acidic residues).

This is an uncharacterized protein from Schizosaccharomyces pombe (strain 972 / ATCC 24843) (Fission yeast).